The primary structure comprises 121 residues: Pro-glucagon (121 aa).

The N-terminal stretch at 1–21 is a signal peptide; sequence MKGAQYLAGLLLLLFVQNSIC. A propeptide spanning residues 80–85 is cleaved from the precursor; the sequence is SNGGSA.

It belongs to the glucagon family.

It is found in the secreted. In terms of biological role, plays a key role in glucose metabolism and homeostasis. Regulates blood glucose by increasing gluconeogenesis and decreasing glycolysis. The protein is Pro-glucagon (gcg) of Carassius auratus (Goldfish).